Reading from the N-terminus, the 872-residue chain is DNA mismatch repair protein MutS (872 aa).

602 to 609 contacts ATP; sequence GPNMSGKS.

The protein belongs to the DNA mismatch repair MutS family.

Its function is as follows. This protein is involved in the repair of mismatches in DNA. It is possible that it carries out the mismatch recognition step. This protein has a weak ATPase activity. This chain is DNA mismatch repair protein MutS, found in Staphylococcus aureus (strain MRSA252).